A 95-amino-acid polypeptide reads, in one-letter code: High mobility group nucleosome-binding domain-containing protein 3 (95 aa).

3 stretches are compositionally biased toward basic and acidic residues: residues 1–25 (MPKRKSPENAEGKDGAKLTKQEPTR), 39–53 (PEPKPRKTSAKKEPG), and 62–72 (GKKEEKQEAGK). A disordered region spans residues 1–95 (MPKRKSPENA…EEVLSTNASH (95 aa)). Position 6 is a phosphoserine (Ser6). Ser78 bears the Phosphoserine mark.

Belongs to the HMGN family. As to quaternary structure, interacts with the ligand binding domain of the thyroid receptor (TR) (in vitro). Requires the presence of thyroid hormone for its interaction. Interacts with transcriptional regulator SEHBP. Interacts with nucleosomes.

Its subcellular location is the nucleus. In terms of biological role, binds to nucleosomes, regulating chromatin structure and consequently, chromatin-dependent processes such as transcription, DNA replication and DNA repair. Affects both insulin and glucagon levels and modulates the expression of pancreatic genes involved in insulin secretion. Regulates the expression of the glucose transporter SLC2A2 by binding specifically to its promoter region and recruiting PDX1 and additional transcription factors. Regulates the expression of SLC6A9, a glycine transporter which regulates the glycine concentration in synaptic junctions in the central nervous system, by binding to its transcription start site. May play a role in ocular development and astrocyte function. The chain is High mobility group nucleosome-binding domain-containing protein 3 (Hmgn3) from Rattus norvegicus (Rat).